A 445-amino-acid polypeptide reads, in one-letter code: FAS-associated factor 2 (445 aa).

A2 bears the N-acetylalanine mark. The 37-residue stretch at 12 to 48 folds into the UBA domain; that stretch reads EQTEKLLQFQDLTGIESMDQCRHTLEQHNWNIEAAVQ. An N6-acetyllysine modification is found at K167. A coiled-coil region spans residues 275-350; the sequence is SERLEREERN…EEKERKLECL (76 aa). The tract at residues 299-361 is disordered; it reads ASLRADQEKE…PEPSPDDPES (63 aa). Positions 303–348 are enriched in basic and acidic residues; the sequence is ADQEKERKKREERERKRRKEEEVQQQKLAEERRRRNLQEEKERKLE. The UBX domain occupies 357 to 439; it reads DDPESVKIIF…GLSHTEVLFV (83 aa).

Identified in a complex that contains SEL1L, OS9, FAF2/UBXD8, UBE2J1/UBC6E and AUP1. Interacts with YOD1. Interacts (via N-terminus) with UBQLN2 (via C-terminus). Interacts with PNPLA2 and UBAC2. Interacts with ZFAND2B; probably through VCP. Interacts with LMBR1L.

It is found in the cytoplasm. The protein resides in the lipid droplet. The protein localises to the endoplasmic reticulum. In terms of biological role, plays an important role in endoplasmic reticulum-associated degradation (ERAD) that mediates ubiquitin-dependent degradation of misfolded endoplasmic reticulum proteins. By controlling the steady-state expression of the IGF1R receptor, indirectly regulates the insulin-like growth factor receptor signaling pathway. Involved in inhibition of lipid droplet degradation by binding to phospholipase PNPL2 and inhibiting its activity by promoting dissociation of PNPL2 from its endogenous activator, ABHD5 which inhibits the rate of triacylglycerol hydrolysis. Involved in stress granule disassembly: associates with ubiquitinated G3BP1 in response to heat shock, thereby promoting interaction between ubiquitinated G3BP1 and VCP, followed by G3BP1 extraction from stress granules and stress granule disassembly. The polypeptide is FAS-associated factor 2 (FAF2) (Bos taurus (Bovine)).